Here is a 72-residue protein sequence, read N- to C-terminus: Delta-actitoxin-Avd2b 3 (72 aa).

An N-terminal signal peptide occupies residues 1–21 (MMSRLLVFLMLGAAFMLVVSA). Residues 22-42 (NDAYGDEPAFKDLNQGDESLG) constitute a propeptide that is removed on maturation. Disulfide bonds link cysteine 47–cysteine 62, cysteine 48–cysteine 56, and cysteine 50–cysteine 67.

It belongs to the sea anemone short toxin (type III) family.

It localises to the secreted. The protein resides in the nematocyst. Its function is as follows. Voltage-gated sodium channel (Nav) inhibitor. 1 uM completely inhibits insect voltage-gated sodium channel inactivation (DmNav1 from D.melanogaster). In Anemonia viridis (Snakelocks anemone), this protein is Delta-actitoxin-Avd2b 3.